The sequence spans 823 residues: Protein ROOT HAIR DEFECTIVE 3 homolog 2 (823 aa).

Residues 1 to 688 lie on the Cytoplasmic side of the membrane; the sequence is MEVPISGGGG…EAHRRSNNWL (688 aa). The region spanning 45 to 260 is the GB1/RHD3-type G domain; that stretch reads GLSYAVVSIV…IAPGGLAADR (216 aa). 55 to 62 contributes to the GTP binding site; the sequence is GPQGSGKS. Positions 226 to 246 form a coiled coil; the sequence is LSSYEEKENLFKEQVGQLRQR. Residues 689–709 form a helical membrane-spanning segment; that stretch reads PPAWTVLLLAILGYNEFIFLL. The Lumenal segment spans residues 710 to 712; sequence RNP. Residues 713–733 form a helical membrane-spanning segment; the sequence is LYLLGLFVAFVVSYAAWLQYD. Topologically, residues 734-823 are cytoplasmic; sequence ITAYFRHGTL…SVGSNSDDES (90 aa). The disordered stretch occupies residues 770-823; that stretch reads NQKSSSHPPRHRPPLHPQSFRNQAQQQSQAQVQYQAPSSLSSSSSVGSNSDDES. Low complexity predominate over residues 786–823; that stretch reads PQSFRNQAQQQSQAQVQYQAPSSLSSSSSVGSNSDDES.

Belongs to the TRAFAC class dynamin-like GTPase superfamily. GB1/RHD3 GTPase family. RHD3 subfamily.

The protein localises to the endoplasmic reticulum membrane. Functionally, probable GTP-binding protein that may be involved in cell development. The protein is Protein ROOT HAIR DEFECTIVE 3 homolog 2 of Oryza sativa subsp. japonica (Rice).